Consider the following 488-residue polypeptide: 6-phosphogluconate dehydrogenase, decarboxylating (488 aa).

Residues G9–G14, N32–T34, V74–A76, and N102 each bind NADP(+). Residues N102 and S128 to G130 each bind substrate. The Proton acceptor role is filled by K183. H186–N187 lines the substrate pocket. Catalysis depends on E190, which acts as the Proton donor. Residues Y191, K260, R287, R451, and H457 each coordinate substrate.

It belongs to the 6-phosphogluconate dehydrogenase family. In terms of assembly, homodimer.

It carries out the reaction 6-phospho-D-gluconate + NADP(+) = D-ribulose 5-phosphate + CO2 + NADPH. Its pathway is carbohydrate degradation; pentose phosphate pathway; D-ribulose 5-phosphate from D-glucose 6-phosphate (oxidative stage): step 3/3. Catalyzes the oxidative decarboxylation of 6-phosphogluconate to ribulose 5-phosphate and CO(2), with concomitant reduction of NADP to NADPH. The protein is 6-phosphogluconate dehydrogenase, decarboxylating (gnd) of Treponema pallidum (strain Nichols).